The chain runs to 117 residues: Large ribosomal subunit protein uL22 (117 aa).

It belongs to the universal ribosomal protein uL22 family. Part of the 50S ribosomal subunit.

Its function is as follows. This protein binds specifically to 23S rRNA; its binding is stimulated by other ribosomal proteins, e.g. L4, L17, and L20. It is important during the early stages of 50S assembly. It makes multiple contacts with different domains of the 23S rRNA in the assembled 50S subunit and ribosome. Functionally, the globular domain of the protein is located near the polypeptide exit tunnel on the outside of the subunit, while an extended beta-hairpin is found that lines the wall of the exit tunnel in the center of the 70S ribosome. In Latilactobacillus sakei subsp. sakei (strain 23K) (Lactobacillus sakei subsp. sakei), this protein is Large ribosomal subunit protein uL22.